Here is a 71-residue protein sequence, read N- to C-terminus: RTCFITPDVKSKPCPPGQEVCYTETWCDGFCGIRGKRVELGCAATCPTPKKTGIDIQCCSTDDCNTFPLRP.

Cystine bridges form between Cys-3–Cys-21, Cys-14–Cys-42, Cys-27–Cys-31, Cys-46–Cys-58, and Cys-59–Cys-64.

Belongs to the three-finger toxin family. Long-chain subfamily. Type II alpha-neurotoxin sub-subfamily. In terms of tissue distribution, expressed by the venom gland.

Its subcellular location is the secreted. Binds with high affinity to muscular (alpha-1/CHRNA1) and neuronal (alpha-7/CHRNA7) nicotinic acetylcholine receptor (nAChR) and inhibits acetylcholine from binding to the receptor, thereby impairing neuromuscular and neuronal transmission. This is Pseudonajatoxin b from Pseudonaja textilis (Eastern brown snake).